Reading from the N-terminus, the 227-residue chain is Cytochrome c oxidase subunit 2 (227 aa).

Residues 1–14 (MAYSFQLGLQDATS) lie on the Mitochondrial intermembrane side of the membrane. The helical transmembrane segment at 15–45 (PIMEELMNFHDHTLMIVFLISSLVLYIISLM) threads the bilayer. At 46 to 59 (LTTKLTHTSTMDAQ) the chain is on the mitochondrial matrix side. Residues 60–87 (EVETIWTILPAVILIMIALPSLRILYMM) traverse the membrane as a helical segment. Over 88-227 (DEINNPVLTV…HFENWSASMI (140 aa)) the chain is Mitochondrial intermembrane. Cu cation contacts are provided by His-161, Cys-196, Glu-198, Cys-200, His-204, and Met-207. Mg(2+) is bound at residue Glu-198.

Belongs to the cytochrome c oxidase subunit 2 family. Component of the cytochrome c oxidase (complex IV, CIV), a multisubunit enzyme composed of 14 subunits. The complex is composed of a catalytic core of 3 subunits MT-CO1, MT-CO2 and MT-CO3, encoded in the mitochondrial DNA, and 11 supernumerary subunits COX4I, COX5A, COX5B, COX6A, COX6B, COX6C, COX7A, COX7B, COX7C, COX8 and NDUFA4, which are encoded in the nuclear genome. The complex exists as a monomer or a dimer and forms supercomplexes (SCs) in the inner mitochondrial membrane with NADH-ubiquinone oxidoreductase (complex I, CI) and ubiquinol-cytochrome c oxidoreductase (cytochrome b-c1 complex, complex III, CIII), resulting in different assemblies (supercomplex SCI(1)III(2)IV(1) and megacomplex MCI(2)III(2)IV(2)). Found in a complex with TMEM177, COA6, COX18, COX20, SCO1 and SCO2. Interacts with TMEM177 in a COX20-dependent manner. Interacts with COX20. Interacts with COX16. The cofactor is Cu cation.

The protein localises to the mitochondrion inner membrane. The catalysed reaction is 4 Fe(II)-[cytochrome c] + O2 + 8 H(+)(in) = 4 Fe(III)-[cytochrome c] + 2 H2O + 4 H(+)(out). Component of the cytochrome c oxidase, the last enzyme in the mitochondrial electron transport chain which drives oxidative phosphorylation. The respiratory chain contains 3 multisubunit complexes succinate dehydrogenase (complex II, CII), ubiquinol-cytochrome c oxidoreductase (cytochrome b-c1 complex, complex III, CIII) and cytochrome c oxidase (complex IV, CIV), that cooperate to transfer electrons derived from NADH and succinate to molecular oxygen, creating an electrochemical gradient over the inner membrane that drives transmembrane transport and the ATP synthase. Cytochrome c oxidase is the component of the respiratory chain that catalyzes the reduction of oxygen to water. Electrons originating from reduced cytochrome c in the intermembrane space (IMS) are transferred via the dinuclear copper A center (CU(A)) of subunit 2 and heme A of subunit 1 to the active site in subunit 1, a binuclear center (BNC) formed by heme A3 and copper B (CU(B)). The BNC reduces molecular oxygen to 2 water molecules using 4 electrons from cytochrome c in the IMS and 4 protons from the mitochondrial matrix. The polypeptide is Cytochrome c oxidase subunit 2 (MT-CO2) (Praomys jacksoni (African forest rat)).